The following is a 405-amino-acid chain: Tyrosine--tRNA ligase (405 aa).

The 'HIGH' region signature appears at 48–57 (PSRPDLHLGH). A 'KMSKS' region motif is present at residues 232–236 (KMSKS). K235 contacts ATP. One can recognise an S4 RNA-binding domain in the interval 339-400 (LPLVDLLTTL…AGKRKFFRIA (62 aa)).

It belongs to the class-I aminoacyl-tRNA synthetase family. TyrS type 2 subfamily. In terms of assembly, homodimer.

The protein resides in the cytoplasm. The enzyme catalyses tRNA(Tyr) + L-tyrosine + ATP = L-tyrosyl-tRNA(Tyr) + AMP + diphosphate + H(+). In terms of biological role, catalyzes the attachment of tyrosine to tRNA(Tyr) in a two-step reaction: tyrosine is first activated by ATP to form Tyr-AMP and then transferred to the acceptor end of tRNA(Tyr). This is Tyrosine--tRNA ligase from Chlorobium luteolum (strain DSM 273 / BCRC 81028 / 2530) (Pelodictyon luteolum).